Here is a 796-residue protein sequence, read N- to C-terminus: Peroxisome proliferator-activated receptor gamma coactivator 1-alpha (796 aa).

An N6-acetyllysine modification is found at Lys77. Residues 98–138 are disordered; it reads PVDEDGLPSFDALTDGDVTTDNEASPSSMPDGTPPPQEAEE. Polar residues predominate over residues 114–127; it reads DVTTDNEASPSSMP. Residues 142–146 carry the LXXLL motif motif; it reads LKKLL. N6-acetyllysine is present on Lys144. A Phosphothreonine; by AMPK modification is found at Thr176. Lys182 carries the post-translational modification N6-acetyllysine. Residues 211 to 275 form a disordered region; the sequence is YLTTNDDPPH…NDPKGSPFEN (65 aa). Residues 217-235 show a composition bias toward basic and acidic residues; that stretch reads DPPHTKPTENRNSSRDKCA. The segment covering 242–258 has biased composition (polar residues); that stretch reads TQPQSQHAQAKPTTLSL. Lys252, Lys269, Lys276, Lys319, Lys345, Lys411, Lys440, and Lys449 each carry N6-acetyllysine. Residues 288 to 350 are disordered; it reads GTAGLTPPTT…HSTKKGPEQS (63 aa). An interaction with PPARG region spans residues 291–337; the sequence is GLTPPTTPPHKANQDNPFKASPKLKPSCKTVVPPPTKRARYSECSGT. The interval 348–796 is mediates interaction with RNF34; it reads EQSELYAQLS…LKEAQRSLRR (449 aa). Ser537 carries the phosphoserine; by AMPK modification. 2 disordered regions span residues 541 to 597 and 611 to 669; these read FNSP…SSRS and HRNS…QKQK. Positions 561–576 are enriched in basic residues; it reads QRMRSRSRSFSRHRSC. Residues 577 to 597 show a composition bias toward low complexity; it reads SRSPYSRSRSRSPGSRSSSRS. The segment covering 620-629 has biased composition (basic residues); it reads SRSRSPYSRR. Positions 630 to 669 are enriched in basic and acidic residues; it reads PRYDSYEANEHERLKRDEYRREYEKRESERAKQRERQKQK. One can recognise an RRM domain in the interval 675–751; the sequence is RVIYVGKIRP…TDFELYFCGR (77 aa). Residues Lys756 and Lys777 each carry the N6-acetyllysine modification.

In terms of assembly, homooligomer. Interacts with MYBBP1A; inhibits MYBBP1A transcriptional activation. Interacts with PRDM16, LPIN1 and PML. Interacts (via LXXLL motif) with RORA and RORC (via AF-2 motif); activates RORA and RORC transcriptional activation. Interacts with LRPPRC. Interacts with FOXO1. Interacts with NR5A2. Phosphorylation by AMPK in skeletal muscle increases activation of its own promoter. Phosphorylated by CLK2. In terms of processing, heavily acetylated by KAT2A/GCN5 under conditions of high nutrients, leading to inactivation of PPARGC1A. Deacetylated by SIRT1 in low nutrients/high NAD conditions, leading to its activation. Post-translationally, ubiquitinated. Ubiquitination by RNF34 induces proteasomal degradation.

The protein localises to the nucleus. It localises to the PML body. Transcriptional coactivator for steroid receptors and nuclear receptors. Greatly increases the transcriptional activity of PPARG and thyroid hormone receptor on the uncoupling protein promoter. Can regulate key mitochondrial genes that contribute to the program of adaptive thermogenesis. Plays an essential role in metabolic reprogramming in response to dietary availability through coordination of the expression of a wide array of genes involved in glucose and fatty acid metabolism. Acts as a key regulator of gluconeogenesis: stimulates hepatic gluconeogenesis by increasing the expression of gluconeogenic enzymes, and acting together with FOXO1 to promote the fasting gluconeogenic program. Induces the expression of PERM1 in the skeletal muscle in an ESRRA-dependent manner. Also involved in the integration of the circadian rhythms and energy metabolism. Required for oscillatory expression of clock genes, such as BMAL1 and NR1D1, through the coactivation of RORA and RORC, and metabolic genes, such as PDK4 and PEPCK. The chain is Peroxisome proliferator-activated receptor gamma coactivator 1-alpha (Ppargc1a) from Rattus norvegicus (Rat).